A 60-amino-acid polypeptide reads, in one-letter code: Putative potassium channel blocker TXKS1 (60 aa).

An N-terminal signal peptide occupies residues 1-28 (MNRLTTIILMLIVINVIMDDISESKVAA). Cystine bridges form between cysteine 32–cysteine 49, cysteine 35–cysteine 55, and cysteine 39–cysteine 57. A Lysine amide modification is found at lysine 59.

Expressed by the venom gland.

Its subcellular location is the secreted. In terms of biological role, inhibits potassium channels. The protein is Putative potassium channel blocker TXKS1 of Olivierus martensii (Manchurian scorpion).